The following is a 348-amino-acid chain: Dihydroorotase (348 aa).

Zn(2+) is bound by residues His17 and His19. Residues 19–21 (HLR) and Asn45 each bind substrate. Lys103, His140, and His178 together coordinate Zn(2+). At Lys103 the chain carries N6-carboxylysine. Residue His140 participates in substrate binding. Leu223 serves as a coordination point for substrate. A Zn(2+)-binding site is contributed by Asp251. The active site involves Asp251. Residues His255 and Ala267 each coordinate substrate.

This sequence belongs to the metallo-dependent hydrolases superfamily. DHOase family. Class II DHOase subfamily. As to quaternary structure, homodimer. Requires Zn(2+) as cofactor.

It carries out the reaction (S)-dihydroorotate + H2O = N-carbamoyl-L-aspartate + H(+). Its pathway is pyrimidine metabolism; UMP biosynthesis via de novo pathway; (S)-dihydroorotate from bicarbonate: step 3/3. Its function is as follows. Catalyzes the reversible cyclization of carbamoyl aspartate to dihydroorotate. The sequence is that of Dihydroorotase from Escherichia coli O157:H7.